The following is a 445-amino-acid chain: Bifunctional protein GlmU (445 aa).

A pyrophosphorylase region spans residues Met-1–Arg-218. UDP-N-acetyl-alpha-D-glucosamine contacts are provided by residues Leu-6–Gly-9, Lys-20, Gln-69, Gly-74–Thr-75, Tyr-96–Asp-98, Gly-134, Glu-147, Asn-162, and Asn-216. Asp-98 serves as a coordination point for Mg(2+). Residue Asn-216 participates in Mg(2+) binding. The linker stretch occupies residues Lys-219–Asn-239. The interval Gly-240–Glu-445 is N-acetyltransferase. Positions 321 and 339 each coordinate UDP-N-acetyl-alpha-D-glucosamine. His-351 serves as the catalytic Proton acceptor. UDP-N-acetyl-alpha-D-glucosamine-binding residues include Tyr-354 and Asn-365. Acetyl-CoA is bound by residues Ala-368, Asn-374 to Tyr-375, Ser-393, Ala-411, and Arg-428.

It in the N-terminal section; belongs to the N-acetylglucosamine-1-phosphate uridyltransferase family. The protein in the C-terminal section; belongs to the transferase hexapeptide repeat family. In terms of assembly, homotrimer. Mg(2+) is required as a cofactor.

Its subcellular location is the cytoplasm. The catalysed reaction is alpha-D-glucosamine 1-phosphate + acetyl-CoA = N-acetyl-alpha-D-glucosamine 1-phosphate + CoA + H(+). It carries out the reaction N-acetyl-alpha-D-glucosamine 1-phosphate + UTP + H(+) = UDP-N-acetyl-alpha-D-glucosamine + diphosphate. The protein operates within nucleotide-sugar biosynthesis; UDP-N-acetyl-alpha-D-glucosamine biosynthesis; N-acetyl-alpha-D-glucosamine 1-phosphate from alpha-D-glucosamine 6-phosphate (route II): step 2/2. Its pathway is nucleotide-sugar biosynthesis; UDP-N-acetyl-alpha-D-glucosamine biosynthesis; UDP-N-acetyl-alpha-D-glucosamine from N-acetyl-alpha-D-glucosamine 1-phosphate: step 1/1. It participates in bacterial outer membrane biogenesis; LPS lipid A biosynthesis. Its function is as follows. Catalyzes the last two sequential reactions in the de novo biosynthetic pathway for UDP-N-acetylglucosamine (UDP-GlcNAc). The C-terminal domain catalyzes the transfer of acetyl group from acetyl coenzyme A to glucosamine-1-phosphate (GlcN-1-P) to produce N-acetylglucosamine-1-phosphate (GlcNAc-1-P), which is converted into UDP-GlcNAc by the transfer of uridine 5-monophosphate (from uridine 5-triphosphate), a reaction catalyzed by the N-terminal domain. The sequence is that of Bifunctional protein GlmU from Thermotoga petrophila (strain ATCC BAA-488 / DSM 13995 / JCM 10881 / RKU-1).